A 201-amino-acid chain; its full sequence is Nuclear protein UL4 (201 aa).

This sequence belongs to the alphaherpesvirinae HHV-1 UL4 family.

It localises to the host nucleus. The polypeptide is Nuclear protein UL4 (Human herpesvirus 2 (strain HG52) (HHV-2)).